The following is a 442-amino-acid chain: D-inositol 3-phosphate glycosyltransferase (442 aa).

Residue H26 coordinates 1D-myo-inositol 3-phosphate. Residues 32–33 (QP) and G40 each bind UDP-N-acetyl-alpha-D-glucosamine. 1D-myo-inositol 3-phosphate-binding positions include 37 to 42 (DAGGMN), K95, Y128, T152, and R172. Residues R246, K251, and Q304 each contribute to the UDP-N-acetyl-alpha-D-glucosamine site. The Mg(2+) site is built by Y313, R314, and A316. E326 and E334 together coordinate UDP-N-acetyl-alpha-D-glucosamine. T340 provides a ligand contact to Mg(2+).

This sequence belongs to the glycosyltransferase group 1 family. MshA subfamily. In terms of assembly, homodimer.

The enzyme catalyses 1D-myo-inositol 3-phosphate + UDP-N-acetyl-alpha-D-glucosamine = 1D-myo-inositol 2-acetamido-2-deoxy-alpha-D-glucopyranoside 3-phosphate + UDP + H(+). Its function is as follows. Catalyzes the transfer of a N-acetyl-glucosamine moiety to 1D-myo-inositol 3-phosphate to produce 1D-myo-inositol 2-acetamido-2-deoxy-glucopyranoside 3-phosphate in the mycothiol biosynthesis pathway. This is D-inositol 3-phosphate glycosyltransferase from Mycolicibacterium gilvum (strain PYR-GCK) (Mycobacterium gilvum (strain PYR-GCK)).